We begin with the raw amino-acid sequence, 1450 residues long: Collagen alpha-1(I) chain (1450 aa).

The signal sequence occupies residues 1–22 (MFSFVDNRLLVLLAACVLLVRA). Residues 23–148 (LDQEDIESGL…PPGLGGNFAP (126 aa)) constitute a propeptide, N-terminal propeptide. A VWFC domain is found at 31–90 (GLCHQEGTTYSDKDVWKPEPCVICVCDNGNIMCDDVTCGDYPVDCPNAEIPFGECCPVCP). Residues 97–1201 (YSEQTGVEGP…EPKSHGDGRY (1105 aa)) form a disordered region. Residues 106–116 (PKGEVGPKGDR) are compositionally biased toward basic and acidic residues. Pro residues predominate over residues 130-140 (LPGPPGPPGPP). A Pyrrolidone carboxylic acid modification is found at Gln-149. Residue Lys-157 is modified to Allysine. The span at 166–181 (PMGPMGPRGPPGPSGS) shows a compositional bias: pro residues. 4-hydroxyproline is present on residues Pro-176, Pro-182, Pro-194, Pro-197, Pro-212, Pro-227, Pro-242, and Pro-248. The span at 182–206 (PGPQGFQGPSGEPGEPGAAGALGPR) shows a compositional bias: low complexity. Residues 215 to 229 (NGDDGESGKPGRPGE) are compositionally biased toward basic and acidic residues. Position 251 is a 5-hydroxylysine; alternate (Lys-251). Lys-251 carries an O-linked (Gal...) hydroxylysine; alternate glycan. The segment covering 266 to 292 (NGPAGPKGEPGNPGENGAPGQAGPRGL) has biased composition (low complexity). A 4-hydroxyproline mark is found at Pro-275, Pro-278, Pro-284, Pro-293, Pro-299, Pro-314, Pro-320, Pro-329, Pro-332, Pro-359, Pro-362, Pro-374, Pro-380, Pro-389, Pro-395, Pro-398, and Pro-413. Pro residues predominate over residues 317 to 331 (AGPPGPTGPTGPPGF). A compositionally biased stretch (low complexity) spans 352-374 (PQGARGEPGAPGPAGAAGPSGNP). The span at 378-387 (GQPGGKGATG) shows a compositional bias: gly residues. A compositionally biased stretch (low complexity) spans 388–443 (SPGIAGAPGFPGARGAPGPQGPAGAPGPKGNNGEPGAQGNKGEPGAKGEPGPAGVQ). Lys-416 carries the post-translational modification 5-hydroxylysine. Pro-422, Pro-437, Pro-446, Pro-461, Pro-467, Pro-476, and Pro-482 each carry 4-hydroxyproline. Residues 471–480 (GERGGPGSRG) show a composition bias toward gly residues. Lys-491 bears the 5-hydroxylysine mark. Residues Pro-494, Pro-515, Pro-521, Pro-530, Pro-533, Pro-551, Pro-569, Pro-578, Pro-590, Pro-608, Pro-626, Pro-632, Pro-644, Pro-650, Pro-656, and Pro-668 each carry the 4-hydroxyproline modification. Low complexity-rich tracts occupy residues 568–578 (FPGPKGAAGEP) and 586–596 (VAGPPGATGAP). Positions 637 to 650 (PAGEAGKPGEQGAP) are enriched in low complexity. A compositionally biased stretch (gly residues) spans 669-678 (GERGGQGPAG). Residues 679–701 (AQGPRGSPGSPGNDGAKGEAGAA) are compositionally biased toward low complexity. 5 positions are modified to 4-hydroxyproline: Pro-689, Pro-704, Pro-710, Pro-716, and Pro-725. Gly residues predominate over residues 702 to 711 (GAPGGRGPPG). Lys-737 is modified (5-hydroxylysine). 11 positions are modified to 4-hydroxyproline: Pro-743, Pro-758, Pro-764, Pro-785, Pro-791, Pro-794, Pro-803, Pro-809, Pro-827, Pro-836, and Pro-845. A compositionally biased stretch (low complexity) spans 796–806 (PAGICGPPGAD). The span at 817-869 (DAGPKGDAGAPGPAGPTGAPGPAGNVGAPGPKGTRGAAGPPGATGFPGAAGRL) shows a compositional bias: low complexity. Position 848 is a 5-hydroxylysine (Lys-848). Residues Pro-857 and Pro-863 each carry the 4-hydroxyproline modification. Pro-871 carries the post-translational modification 3-hydroxyproline. A 4-hydroxyproline mark is found at Pro-872, Pro-881, Pro-884, Pro-908, Pro-914, Pro-923, Pro-932, Pro-950, Pro-962, Pro-968, Pro-983, Pro-989, Pro-995, Pro-1004, and Pro-1010. The span at 917 to 943 (SGEKGSPGSDGPAGAPGIPGPQGIAGQ) shows a compositional bias: low complexity. The span at 982 to 997 (PPGPSGPPGLGGPPGE) shows a compositional bias: pro residues. Residue Lys-1019 is modified to 5-hydroxylysine. The span at 1028–1043 (SGPPGAPGAPGAPGPV) shows a compositional bias: pro residues. Pro-1031, Pro-1034, and Pro-1037 each carry 4-hydroxyproline. The span at 1064-1078 (AGPSGVRGAPGPAGA) shows a compositional bias: low complexity. Over residues 1079–1093 (RGDKGEAGEQGERGM) the composition is skewed to basic and acidic residues. Residue Lys-1082 is modified to 5-hydroxylysine. Lys-1094 carries the post-translational modification 5-hydroxylysine; alternate. A glycan (O-linked (Gal...) hydroxylysine; alternate) is linked at Lys-1094. 4-hydroxyproline occurs at positions 1106 and 1109. Residues 1120–1129 (PSGPAGPRGP) are compositionally biased toward pro residues. Residues Pro-1130 and Pro-1145 each carry the 4-hydroxyproline modification. A compositionally biased stretch (low complexity) spans 1130-1145 (PGSSGSTGKDGVNGLP). Pro-1150 is subject to 3-hydroxyproline. Pro-1151 is subject to 4-hydroxyproline. The segment covering 1163–1178 (AGPPGPPGPPGPPGPP) has biased composition (pro residues). Pro-1165 carries the 3-hydroxyproline modification. Pro-1166 is subject to 4-hydroxyproline. Residue Pro-1168 is modified to 3-hydroxyproline. Pro-1169 is subject to 4-hydroxyproline. Position 1171 is a 3-hydroxyproline (Pro-1171). 4-hydroxyproline occurs at positions 1172, 1175, and 1178. The residue at position 1194 (Lys-1194) is an Allysine. Residues 1205 to 1450 (DDANVVRDRD…GIDIGPVCFL (246 aa)) constitute a propeptide, C-terminal propeptide. A Fibrillar collagen NC1 domain is found at 1215–1450 (LEVDTTLKSL…GIDIGPVCFL (236 aa)). Intrachain disulfides connect Cys-1245–Cys-1277, Cys-1285–Cys-1448, and Cys-1356–Cys-1401. Positions 1263, 1265, 1266, 1268, and 1271 each coordinate Ca(2+). Asn-1351 carries an N-linked (GlcNAc...) asparagine glycan.

The protein belongs to the fibrillar collagen family. As to quaternary structure, trimers of one alpha 2(I) and two alpha 1(I) chains. In terms of processing, contains mostly 4-hydroxyproline. Proline residues at the third position of the tripeptide repeating unit (G-X-Y) are hydroxylated in some or all of the chains. Post-translationally, contains 3-hydroxyproline at a few sites. This modification occurs on the first proline residue in the sequence motif Gly-Pro-Hyp, where Hyp is 4-hydroxyproline. Lysine residues at the third position of the tripeptide repeating unit (G-X-Y) are 5-hydroxylated in some or all of the chains. In terms of processing, O-glycosylated on hydroxylated lysine residues. The O-linked glycan consists of a Glc-Gal disaccharide.

The protein localises to the secreted. It localises to the extracellular space. Its subcellular location is the extracellular matrix. Its function is as follows. Type I collagen is a member of group I collagen (fibrillar forming collagen). The chain is Collagen alpha-1(I) chain (COL1A1) from Cynops pyrrhogaster (Japanese fire-bellied newt).